Consider the following 250-residue polypeptide: Phosphate import ATP-binding protein PstB (250 aa).

An ABC transporter domain is found at 4-245; it reads LTARDLKLSF…PRHELTEKYV (242 aa). 36–43 contacts ATP; it reads GPSGSGKS.

This sequence belongs to the ABC transporter superfamily. Phosphate importer (TC 3.A.1.7) family. The complex is composed of two ATP-binding proteins (PstB), two transmembrane proteins (PstC and PstA) and a solute-binding protein (PstS).

Its subcellular location is the cell membrane. It carries out the reaction phosphate(out) + ATP + H2O = ADP + 2 phosphate(in) + H(+). Part of the ABC transporter complex PstSACB involved in phosphate import. Responsible for energy coupling to the transport system. This is Phosphate import ATP-binding protein PstB from Pyrobaculum aerophilum (strain ATCC 51768 / DSM 7523 / JCM 9630 / CIP 104966 / NBRC 100827 / IM2).